The following is a 438-amino-acid chain: Fumarate hydratase class II (438 aa).

Substrate contacts are provided by residues 76–78 (SGT), 101–104 (HPND), 111–113 (SSN), and Thr-159. The Proton donor/acceptor role is filled by His-160. Residue Ser-291 is part of the active site. Substrate is bound by residues Ser-292 and 297–299 (KTN).

It belongs to the class-II fumarase/aspartase family. Fumarase subfamily. Homotetramer.

It localises to the cytoplasm. The enzyme catalyses (S)-malate = fumarate + H2O. The protein operates within carbohydrate metabolism; tricarboxylic acid cycle; (S)-malate from fumarate: step 1/1. Involved in the TCA cycle. Catalyzes the stereospecific interconversion of fumarate to L-malate. This Saccharolobus solfataricus (strain ATCC 35092 / DSM 1617 / JCM 11322 / P2) (Sulfolobus solfataricus) protein is Fumarate hydratase class II.